The primary structure comprises 2532 residues: Lovastatin diketide synthase lovF (2532 aa).

Residues 10-430 (PAPIAMVGMG…GANAHAIVEQ (421 aa)) form the Ketosynthase family 3 (KS3) domain. Catalysis depends on for beta-ketoacyl synthase activity residues C183, H318, and H353. A malonyl-CoA:ACP transacylase (MAT) domain region spans residues 545–870 (VFTGQGAQWF…PYLSCLSRGK (326 aa)). S635 serves as the catalytic For malonyltransferase activity. The segment at 941–1078 (HDLIGLQEPL…GLVRAEMDQP (138 aa)) is N-terminal hotdog fold. Residues 941 to 1246 (HDLIGLQEPL…LEGLVFQSLG (306 aa)) form a dehydratase (DH) domain region. Positions 941–1251 (HDLIGLQEPL…FQSLGASLGT (311 aa)) constitute a PKS/mFAS DH domain. Catalysis depends on H973, which acts as the Proton acceptor; for dehydratase activity. A disordered region spans residues 1075–1094 (MDQPPSSLSNQQRIDPRPWS). Polar residues predominate over residues 1078-1087 (PPSSLSNQQR). Positions 1092–1251 (PWSRKTAPQE…FQSLGASLGT (160 aa)) are C-terminal hotdog fold. Catalysis depends on D1159, which acts as the Proton donor; for dehydratase activity. A methyltransferase (CMet) domain region spans residues 1423–1607 (ELVRLCCHKN…ARDCDSHEFY (185 aa)). The tract at residues 1825–2144 (GLLDSLHFTK…SGQHVGKIVV (320 aa)) is enoylreductase (ER) domain. Positions 2168–2340 (SYLVAGGLGG…AVTIDLGMVQ (173 aa)) are ketoreductase (KR) domain. The Carrier domain occupies 2453–2530 (ESIAVIMEAM…KVAEVVLQRY (78 aa)). An O-(pantetheine 4'-phosphoryl)serine modification is found at S2490.

Interacts with LovD. Pantetheine 4'-phosphate is required as a cofactor.

It carries out the reaction holo-[2-methylbutanoate polyketide synthase] + 2 malonyl-CoA + S-adenosyl-L-methionine + 2 NADPH + 3 H(+) = (S)-2-methylbutanoyl-[2-methylbutanoate polyketide synthase] + S-adenosyl-L-homocysteine + 2 CO2 + 2 NADP(+) + 2 CoA + H2O. It participates in polyketide biosynthesis; lovastatin biosynthesis. Its function is as follows. Lovastatin diketide synthase; part of the gene cluster that mediates the biosynthesis of lovastatin (also known as mevinolin, mevacor or monacolin K), a hypolipidemic inhibitor of (3S)-hydroxymethylglutaryl-coenzyme A (HMG-CoA) reductase (HMGR). The first step in the biosynthesis of lovastatin is the production of dihydromonacolin L acid by the lovastatin nonaketide synthase lovB and the trans-acting enoyl reductase lovC via condensation of one acetyl-CoA unit and 8 malonyl-CoA units. Dihydromonacolin L acid is released from lovB by the thioesterase lovG. Next, dihydromonacolin L acid is oxidized by the dihydromonacolin L monooxygenase lovA twice to form monacolin J acid. The 2-methylbutyrate moiety of lovastatin is synthesized by the lovastatin diketide synthase lovF via condensation of one acetyl-CoA unit and one malonyl-CoA unit. Finally, the covalent attachment of this moiety to monacolin J acid is catalyzed by the transesterase lovD to yield lovastatin. LovD has broad substrate specificity and can also convert monacolin J to simvastatin using alpha-dimethylbutanoyl-S-methyl-3-mercaptopropionate (DMB-S-MMP) as the thioester acyl donor, and can also catalyze the reverse reaction and function as hydrolase in vitro. LovD has much higher activity with LovF-bound 2-methylbutanoate than with free diketide substrates. The protein is Lovastatin diketide synthase lovF of Aspergillus terreus.